The primary structure comprises 621 residues: Myosin-binding protein C, slow-type (621 aa).

3 Ig-like C2-type domains span residues 1-53 (EEIV…VDLR), 54-142 (PLKI…HVID), and 144-241 (PKII…LWIS). T28 carries the phosphothreonine modification. Phosphoserine is present on S233. Fibronectin type-III domains lie at 244–343 (LRLA…TSPP), 344–459 (TLLA…IEPP), and 556–621 (PPQA…VIGN). A Phosphothreonine modification is found at T420. A Phosphotyrosine modification is found at Y445. Positions 459 to 553 (PKIRIPRHLK…ASIDIQIVDR (95 aa)) constitute an Ig-like C2-type 4 domain.

It belongs to the immunoglobulin superfamily. MyBP family. In terms of assembly, interacts with USP25 (isoform USP25m only); the interaction prevents proteasomal degradation of MYBPC1.

Its function is as follows. Thick filament-associated protein located in the crossbridge region of vertebrate striated muscle a bands. Slow skeletal protein that binds to both myosin and actin. In vitro, binds to native thin filaments and modifies the activity of actin-activated myosin ATPase. May modulate muscle contraction or may play a more structural role. This chain is Myosin-binding protein C, slow-type (Mybpc1), found in Rattus norvegicus (Rat).